The primary structure comprises 515 residues: NADH-quinone oxidoreductase subunit N (515 aa).

14 helical membrane-spanning segments follow: residues 14 to 34 (ITPILVILGAACLGVLVEAFL), 40 to 60 (WSAQVGLSLLALVAAGVALAL), 80 to 100 (APTLFLWGTLLALGLGAILLI), 138 to 158 (TEVFPLALFALGGMMVFCAAN), 160 to 180 (LLTMFIALEVLSLPLYLMCGL), 195 to 215 (YFLLGAFASAFFLYGLALLYG), 239 to 259 (LFAGLGLLVVGLLFKASVGPF), 271 to 291 (PTAVTGFMAACTKVAAFGGIL), 307 to 327 (GVLYAVAIVSMAIGVVLGLTQ), 333 to 353 (MIAYSSVAHAGFLLVGSIALT), 361 to 381 (MFYLLAYGFTTIAIFGVISLV), 404 to 424 (VAWVFTFLLLALAGIPMTSGF), 438 to 458 (GMAPLVVVALVASAVAAFFYL), and 485 to 505 (AAITLGVVVTLLLGVLPSLAL).

Belongs to the complex I subunit 2 family. In terms of assembly, NDH-1 is composed of 14 different subunits. Subunits NuoA, H, J, K, L, M, N constitute the membrane sector of the complex.

It is found in the cell membrane. The enzyme catalyses a quinone + NADH + 5 H(+)(in) = a quinol + NAD(+) + 4 H(+)(out). NDH-1 shuttles electrons from NADH, via FMN and iron-sulfur (Fe-S) centers, to quinones in the respiratory chain. The immediate electron acceptor for the enzyme in this species is believed to be a menaquinone. Couples the redox reaction to proton translocation (for every two electrons transferred, four hydrogen ions are translocated across the cytoplasmic membrane), and thus conserves the redox energy in a proton gradient. The sequence is that of NADH-quinone oxidoreductase subunit N from Saccharopolyspora erythraea (strain ATCC 11635 / DSM 40517 / JCM 4748 / NBRC 13426 / NCIMB 8594 / NRRL 2338).